The sequence spans 200 residues: UPF0316 protein SAUSA300_1892 (200 aa).

A run of 3 helical transmembrane segments spans residues Pro8–Met28, Ile40–Met60, and Ile66–Ile86.

Belongs to the UPF0316 family.

Its subcellular location is the cell membrane. The sequence is that of UPF0316 protein SAUSA300_1892 from Staphylococcus aureus (strain USA300).